Consider the following 211-residue polypeptide: UPF0319 protein VC_A0026 (211 aa).

Positions 1–21 are cleaved as a signal peptide; the sequence is MKPMQRLTCLLALCFAASASA.

It belongs to the UPF0319 family.

This is UPF0319 protein VC_A0026 from Vibrio cholerae serotype O1 (strain ATCC 39315 / El Tor Inaba N16961).